Consider the following 356-residue polypeptide: DNA polymerase IV (356 aa).

In terms of domain architecture, UmuC spans 4–185; that stretch reads IIHIDMDCYY…LALGKIPGVG (182 aa). 2 residues coordinate Mg(2+): D8 and D103. E104 is an active-site residue.

The protein belongs to the DNA polymerase type-Y family. Monomer. Requires Mg(2+) as cofactor.

The protein localises to the cytoplasm. It catalyses the reaction DNA(n) + a 2'-deoxyribonucleoside 5'-triphosphate = DNA(n+1) + diphosphate. Functionally, poorly processive, error-prone DNA polymerase involved in untargeted mutagenesis. Copies undamaged DNA at stalled replication forks, which arise in vivo from mismatched or misaligned primer ends. These misaligned primers can be extended by PolIV. Exhibits no 3'-5' exonuclease (proofreading) activity. May be involved in translesional synthesis, in conjunction with the beta clamp from PolIII. This chain is DNA polymerase IV, found in Pseudoalteromonas atlantica (strain T6c / ATCC BAA-1087).